Reading from the N-terminus, the 1196-residue chain is Calcium-activated potassium channel subunit alpha-1 (1196 aa).

At 1 to 52 the chain is on the extracellular side; the sequence is MATWNASQIILNSMSNIIESPQSKPRPVMASNGASLFIPVTMEVPCDQGTRM. The chain crosses the membrane as a helical span at residues 53-73; that stretch reads WWAFLASSMVTFFGGLFIILV. The Cytoplasmic portion of the chain corresponds to 74–146; that stretch reads WRTFKYLWTV…MISAQTLTGR (73 aa). Residues 147 to 167 traverse the membrane as a helical segment; sequence VLVVTVFALSIGALMIYFIDS. Residues 168 to 182 lie on the Extracellular side of the membrane; that stretch reads SNPIESCQNFYKDFT. The chain crosses the membrane as a helical span at residues 183 to 203; sequence LQIDMAFNIFFLLYFGLRFIA. The Cytoplasmic segment spans residues 204-207; sequence ANDK. The chain crosses the membrane as a helical span at residues 208 to 228; that stretch reads LWFWLEVNSVVDFFTVPPVFV. Topologically, residues 229–232 are extracellular; that stretch reads SVYL. A helical; Voltage-sensor transmembrane segment spans residues 233 to 253; that stretch reads NRSWLGLRFLRALRLIQFSEI. Over 254-268 the chain is Cytoplasmic; it reads LQFLNILKTSNSIKL. The helical transmembrane segment at 269–289 threads the bilayer; sequence VNLCSIFISTWLTAAGFIHLV. Residues 290 to 303 lie on the Extracellular side of the membrane; the sequence is ENSGDPWRNFENSQ. The segment at residues 304 to 326 is an intramembrane region (pore-forming); sequence DLSYWECMYLLMVTMSTVGYGDV. Residues 320 to 323 carry the Selectivity for potassium motif; the sequence is TVGY. Residues 327-335 are Extracellular-facing; sequence YAKTTLGRL. The chain crosses the membrane as a helical span at residues 336 to 356; the sequence is FMVFFILGGLAMFASYVPEII. The Cytoplasmic segment spans residues 357 to 1196; it reads ELIGNRKKYG…PPIREVEDEC (840 aa). In terms of domain architecture, RCK N-terminal 1 spans 375–517; sequence RKHIVVCGHI…WNWKDGDDAI (143 aa). Residues Glu407, Gln430, and Glu432 each contribute to the Mg(2+) site. The segment S7 stretch occupies residues 524 to 544; that stretch reads LGFIAQSCLAQGLSTMLANLF. The segment S8 stretch occupies residues 581-601; sequence LSFPAVCELCFVKLKLLMIAI. The tract at residues 645 to 649 is heme-binding motif; sequence CKACH. The disordered stretch occupies residues 672–697; that stretch reads SALSPKKKQRNGGMRHSPNTSPNMMR. A segment S9 region spans residues 748–768; the sequence is VLSGHVVVCIFGDMTSALIGV. One can recognise an RCK N-terminal 2 domain in the interval 750 to 894; the sequence is SGHVVVCIFG…MERSSPDNSP (145 aa). The Calcium bowl signature appears at 914–936; that stretch reads TELVNDSNVQFLDQDDDDDPDTE. Gln923, Asp926, Asp929, and Asp931 together coordinate Ca(2+). A segment S10 region spans residues 943–963; that stretch reads FACGTAFAVSVLDSLMSATYF. Residues 1098–1119 show a composition bias toward low complexity; sequence ASLSHSSHSSHSSSKKSSSVTS. The interval 1098–1149 is disordered; that stretch reads ASLSHSSHSSHSSSKKSSSVTSILHTASANRQNRVKARDSRDKQKMGQAEKK. Positions 1120–1129 are enriched in polar residues; it reads ILHTASANRQ. Residues 1133 to 1149 show a composition bias toward basic and acidic residues; the sequence is KARDSRDKQKMGQAEKK.

Belongs to the potassium channel family. Calcium-activated (TC 1.A.1.3) subfamily. KCa1.1/KCNMA1 sub-subfamily. As to quaternary structure, homotetramer; which constitutes the calcium-activated potassium channel. Expressed in both the somites and neural tube of 1 day embryos. Within the nervous system, it is restricted to dorsal parts, and expressed centrally in regions dedicated to processing of sensory information. Six hours later, it is expressed segmentally within the somites. At this time, it is expressed in a primary sensory organ, the trigeminal ganglion. By 2 days, it is also expressed in other primary sensory organs, such as the otic vesicle, and the eye. Within the retina, it is expressed to an internal layer. In the developing otic vesicle, it is abundantly expressed near the apical surface. Isoform 3 is neural-specific, and is only expressed during late stages of neuronal differentiation.

The protein resides in the cell membrane. It catalyses the reaction K(+)(in) = K(+)(out). Ethanol and carbon monoxide-bound heme increase channel activation. Heme inhibits channel activation. In terms of biological role, potassium channel activated by both membrane depolarization or increase in cytosolic Ca(2+) that mediates export of K(+). It is also activated by the concentration of cytosolic Mg(2+). Its activation dampens the excitatory events that elevate the cytosolic Ca(2+) concentration and/or depolarize the cell membrane. It therefore contributes to repolarization of the membrane potential. Plays a key role in controlling excitability in a number of systems, such as regulation of the contraction of smooth muscle, the tuning of hair cells in the cochlea, regulation of transmitter release, and innate immunity. In smooth muscles, its activation by high level of Ca(2+), caused by ryanodine receptors in the sarcoplasmic reticulum, regulates the membrane potential. In cochlea cells, its number and kinetic properties partly determine the characteristic frequency of each hair cell and thereby helps to establish a tonotopic map. Highly sensitive to both iberiotoxin (IbTx) and charybdotoxin (CTX). The sequence is that of Calcium-activated potassium channel subunit alpha-1 (kcnma1) from Xenopus laevis (African clawed frog).